Reading from the N-terminus, the 312-residue chain is DNA-directed RNA polymerase subunit alpha (312 aa).

Residues 1 to 229 are alpha N-terminal domain (alpha-NTD); the sequence is MLQYQIERID…ELFQPLATVT (229 aa). Residues 240–312 are alpha C-terminal domain (alpha-CTD); it reads PSPEAQIPLE…ISIPQSRTSV (73 aa).

This sequence belongs to the RNA polymerase alpha chain family. As to quaternary structure, in cyanobacteria the RNAP catalytic core is composed of 2 alpha, 1 beta, 1 beta', 1 gamma and 1 omega subunit. When a sigma factor is associated with the core the holoenzyme is formed, which can initiate transcription.

The enzyme catalyses RNA(n) + a ribonucleoside 5'-triphosphate = RNA(n+1) + diphosphate. Functionally, DNA-dependent RNA polymerase catalyzes the transcription of DNA into RNA using the four ribonucleoside triphosphates as substrates. The chain is DNA-directed RNA polymerase subunit alpha from Prochlorococcus marinus (strain MIT 9301).